Here is a 558-residue protein sequence, read N- to C-terminus: Membrane protein insertase YidC (558 aa).

The next 5 membrane-spanning stretches (helical) occupy residues 6–26, 359–379, 434–454, 480–500, and 513–533; these read SFFI…WDDE, FIHT…TVII, LGGC…YYML, ILPI…PTTI, and LVIF…YYII.

The protein belongs to the OXA1/ALB3/YidC family. Type 1 subfamily. Interacts with the Sec translocase complex via SecD. Specifically interacts with transmembrane segments of nascent integral membrane proteins during membrane integration.

Its subcellular location is the cell inner membrane. In terms of biological role, required for the insertion and/or proper folding and/or complex formation of integral membrane proteins into the membrane. Involved in integration of membrane proteins that insert both dependently and independently of the Sec translocase complex, as well as at least some lipoproteins. Aids folding of multispanning membrane proteins. This chain is Membrane protein insertase YidC, found in Blochmanniella floridana.